The following is a 192-amino-acid chain: Sporulation initiation phosphotransferase B (192 aa).

Phosphohistidine is present on His30.

Homodimer. Dimerization is essential for activity as both monomers contribute to the formation of the active site. In terms of processing, phosphorylated by spo0F.

The protein localises to the cytoplasm. Its function is as follows. Key element in the phosphorelay regulating sporulation initiation. Acts on spo0A. Mediates reversible phosphoryl transfer from spo0F to spo0A. This Bacillus subtilis (strain 168) protein is Sporulation initiation phosphotransferase B (spo0B).